Consider the following 207-residue polypeptide: Strobilurin A biosynthesis cluster protein r1 (207 aa).

2 consecutive transmembrane segments (helical) span residues phenylalanine 108–leucine 128 and asparagine 169–isoleucine 189.

It is found in the membrane. It participates in mycotoxin biosynthesis. In terms of biological role, part of the gene cluster that mediates the biosynthesis of strobilurin A, an antifungal polyketide that contains a key beta-methoxyacrylate toxophore that targets the complex III of the mitochondrial electron transport chain. Strobilurin biosynthesis begins with construction of benzoyl CoA by step-wise elimination of ammonia from phenylalanine by the phenylalanine ammonia-lyase str11, oxygenation by str8 and retro-Claisen reaction to form benzoic acid, which is activated to its CoA thiolester benzoyl CoA by the dedicated CoA ligase str10. Benzoyl CoA forms the starter unit for the highly reducing polyketide synthase stpks1 that produces the polyketide prestrobilutin A. The FAD-dependent oxygenase str9 then catalyzes the key oxidative rearrangement responsible for the creation of the beta-methoxyacrylate toxophore. Str9 performs epoxidation of the 2,3 olefin of prestrobilutin A, followed by Meinwald rearrangement to furnish the aldehyde intermediate. Rapid enolization of the aldehyde intermediate would give the beta-methoxyacrylate skeleton and methylations catalyzed by str2 and str3 complete the synthesis and lead to the production of strobilurin A. The short-chain dehydrogenase stl2 and the dehydrogenase str4 play a role in the shunt pathway leading to the production of bolineol. The cluster encodes no obvious halogenase gene that could be involved in production of strobilurin B, nor any obvious dimethylallyl-transferase that could be involved in the production of strobilurin G. It is possible that unknown proteins encoded in, or near, the cluster (such as str1 or stl1) may form new classes of halogenases or dimethylally-transferases, or that the responsible genes are located elsewhere on the genome. Similarly, proteins encoded by str5/str6 hydrolases appear to have no chemical role in the biosynthesis of strobilurin A. Finally, no obvious self-resistance gene is found within the cluster. In Strobilurus tenacellus, this protein is Strobilurin A biosynthesis cluster protein r1.